A 96-amino-acid polypeptide reads, in one-letter code: Small ribosomal subunit protein bS20 (96 aa).

The tract at residues 1 to 27 (MAKQEVAAKKVKRPTALKRDLQNKKKR) is disordered.

Belongs to the bacterial ribosomal protein bS20 family.

Binds directly to 16S ribosomal RNA. The chain is Small ribosomal subunit protein bS20 from Protochlamydia amoebophila (strain UWE25).